Reading from the N-terminus, the 236-residue chain is ATP synthase subunit a (236 aa).

A run of 5 helical transmembrane segments spans residues 17–37 (LANV…AVLA), 80–100 (MTLI…SVVI), 114–134 (VVTL…GIKL), 179–199 (ILLA…IAAI), and 208–228 (FSIF…MVYM).

The protein belongs to the ATPase A chain family. In terms of assembly, F-type ATPases have 2 components, CF(1) - the catalytic core - and CF(0) - the membrane proton channel. CF(1) has five subunits: alpha(3), beta(3), gamma(1), delta(1), epsilon(1). CF(0) has three main subunits: a(1), b(2) and c(9-12). The alpha and beta chains form an alternating ring which encloses part of the gamma chain. CF(1) is attached to CF(0) by a central stalk formed by the gamma and epsilon chains, while a peripheral stalk is formed by the delta and b chains.

Its subcellular location is the cell membrane. Functionally, key component of the proton channel; it plays a direct role in the translocation of protons across the membrane. The chain is ATP synthase subunit a from Anoxybacillus flavithermus (strain DSM 21510 / WK1).